The primary structure comprises 461 residues: Ribulose bisphosphate carboxylase (461 aa).

Position 112 (Asn112) interacts with substrate. The active-site Proton acceptor is Lys167. Lys169 contacts substrate. Mg(2+)-binding residues include Lys192, Asp194, and Glu195. Lys192 is modified (N6-carboxylysine). His288 functions as the Proton acceptor in the catalytic mechanism. Arg289, His322, and Ser369 together coordinate substrate.

The protein belongs to the RuBisCO large chain family. Type II subfamily. In terms of assembly, homodimer. Requires Mg(2+) as cofactor.

It carries out the reaction 2 (2R)-3-phosphoglycerate + 2 H(+) = D-ribulose 1,5-bisphosphate + CO2 + H2O. The enzyme catalyses D-ribulose 1,5-bisphosphate + O2 = 2-phosphoglycolate + (2R)-3-phosphoglycerate + 2 H(+). RuBisCO catalyzes two reactions: the carboxylation of D-ribulose 1,5-bisphosphate, the primary event in carbon dioxide fixation, as well as the oxidative fragmentation of the pentose substrate. Both reactions occur simultaneously and in competition at the same active site. The polypeptide is Ribulose bisphosphate carboxylase (Rhodopseudomonas palustris (strain BisB5)).